The sequence spans 486 residues: Serralysin (486 aa).

His187 is a binding site for Zn(2+). The active site involves Glu188. Residues His191 and His197 each contribute to the Zn(2+) site. 8 residues coordinate Ca(2+): Arg266, Asp269, Asp298, Gly300, Gly301, Asp303, Thr340, and Glu342. Hemolysin-type calcium-binding repeat units lie at residues 345 to 362 and 363 to 380; these read IGGSGNDVLIGNDAANTL and KGGAGDDIIYGGLGADNL.

It belongs to the peptidase M10B family. Zn(2+) serves as cofactor. Ca(2+) is required as a cofactor.

The protein resides in the secreted. The catalysed reaction is Preferential cleavage of bonds with hydrophobic residues in P1'.. This chain is Serralysin (prtA1), found in Photorhabdus luminescens (Xenorhabdus luminescens).